Reading from the N-terminus, the 618-residue chain is Origin recognition complex subunit 2 (618 aa).

Disordered stretches follow at residues 1 to 116 (MSAS…AAKD) and 149 to 274 (NATP…KKSN). Thr24 carries the post-translational modification Phosphothreonine. Residues Ser26 and Ser30 each carry the phosphoserine modification. The span at 49 to 59 (TSRRSTRRPSP) shows a compositional bias: basic residues. The segment covering 70 to 79 (SNGKGQEERI) has biased composition (basic and acidic residues). A phosphoserine mark is found at Ser87, Ser91, and Ser92. Positions 94 to 107 (AEDQEEEESIEESE) are enriched in acidic residues. A phosphothreonine mark is found at Thr151, Thr154, Thr157, Thr160, Thr167, Thr170, and Thr181. The segment covering 151–161 (TPCTPKTPKTP) has biased composition (low complexity). The segment covering 183-193 (AHVRTRVKKQI) has biased composition (basic residues). Acidic residues predominate over residues 199–208 (DSDEDFSGDE). The segment covering 219–233 (SSSSSSSDAGNSSDN) has biased composition (low complexity). Position 258 is a phosphothreonine (Thr258). Ser260 is subject to Phosphoserine.

It belongs to the ORC2 family. ORC is composed of six subunits. Interacts with Mcm10. Interacts with CG9890. Interaction between the TREX-2/AMEX complex and the ORC complex is required for ORC localization to mRNPs, and consequently mRNA export.

The protein localises to the nucleus. The protein resides in the chromosome. It is found in the centromere. Component of the origin recognition complex (ORC) that binds origins of replication. DNA-binding is ATP-dependent, however specific DNA sequences that define origins of replication have not been identified so far. ORC is required to assemble the pre-replication complex necessary to initiate DNA replication. As part of the ORC complex, might also have a role in mRNA export. The chain is Origin recognition complex subunit 2 (Orc2) from Drosophila melanogaster (Fruit fly).